We begin with the raw amino-acid sequence, 980 residues long: GPI inositol-deacylase (980 aa).

The Cytoplasmic segment spans residues 1-7 (MFMFRNC). The helical transmembrane segment at 8–28 (AVLLVIGSICCFIYGLFRLHV) threads the bilayer. At 29–628 (EVEPNACRMT…EYSYSSALSR (600 aa)) the chain is on the lumenal side. Ser-170 is a catalytic residue. 3 N-linked (GlcNAc...) asparagine glycosylation sites follow: Asn-427, Asn-517, and Asn-596. Residues 629-649 (LVLEFYGWLPAHLVCVLLIVL) traverse the membrane as a helical segment. Residues 650–709 (RKQVETFYDVGTFRSLRPYVGYLQYTSLYIVTACRLLKKLIISSRVFPEPEPLDYSINVS) lie on the Cytoplasmic side of the membrane. A helical membrane pass occupies residues 710-730 (IVIHCAAIALSLLATLGTWLA). Residues 731 to 774 (LTLYGNAFYRLALRITRLSQATSNVMISIMTHLPITYGILTIAT) are Lumenal-facing. The helical transmembrane segment at 775 to 795 (AMGTCSGVGLLLAFVFYFLML) threads the bilayer. Topologically, residues 796–867 (SNAYKDYLED…CVGLQNFSFH (72 aa)) are cytoplasmic. The tract at residues 821–853 (AVTEQEDATEEQNEEQNALKQNDEQKQQQQEEE) is disordered. Residues 824 to 834 (EQEDATEEQNE) show a composition bias toward acidic residues. Residues 868–888 (VTLLLMLFVQLLLNAPSSLAW) traverse the membrane as a helical segment. Over 889 to 895 (LRSRRHG) the chain is Lumenal. The helical transmembrane segment at 896–916 (INLPDPSLYPSIVVLASLSLL) threads the bilayer. At 917–929 (LQLRAPQKCQGYW) the chain is on the cytoplasmic side. The chain crosses the membrane as a helical span at residues 930–950 (MLSIAFYILAGVVLLYCQAAI). Topologically, residues 951-954 (YRLT) are lumenal. Residues 955–975 (YVIAGAFALLSAHQSLWILWG) form a helical membrane-spanning segment. Residues 976–980 (RVSRV) lie on the Cytoplasmic side of the membrane.

It belongs to the GPI inositol-deacylase family.

It is found in the endoplasmic reticulum membrane. Involved in inositol deacylation of GPI-anchored proteins. The protein is GPI inositol-deacylase of Drosophila melanogaster (Fruit fly).